Here is a 481-residue protein sequence, read N- to C-terminus: Cysteine--tRNA ligase (481 aa).

Cys43 provides a ligand contact to Zn(2+). The short motif at 45 to 55 (ATVQGLPHIGH) is the 'HIGH' region element. Zn(2+) is bound by residues Cys221, His246, and Glu250. Positions 277–281 (KMSKS) match the 'KMSKS' region motif. Lys280 serves as a coordination point for ATP.

Belongs to the class-I aminoacyl-tRNA synthetase family. Monomer. It depends on Zn(2+) as a cofactor.

Its subcellular location is the cytoplasm. The enzyme catalyses tRNA(Cys) + L-cysteine + ATP = L-cysteinyl-tRNA(Cys) + AMP + diphosphate. This chain is Cysteine--tRNA ligase, found in Mycobacterium sp. (strain JLS).